Reading from the N-terminus, the 285-residue chain is MKGQIVRIIAGFYDVVDLKNRKLYPLLRGSGLLRLNETSPIVGDFVDFEEKGFIKKIYERKNQLIRPKVANIDQALVFISIREPNFSSLLLDKFLLVIEAKNIPVILLVTKIDLDSNFENLLLDYQKMNYNIFFINNKKNEIPVELKLELEKKLNFVIGQTGVGKTSFINNFLDKKFAIQEISQTLNRGKHTTRVVQIIEKENFRIIDSPGFSSFSYSEISKNEIRNAFKIFKKFSSDCKFRSCFHFQEKTDQCAIKRALKDGKIPENRYKNYLYFLGKYEKKNY.

Residues 61–215 form the CP-type G domain; sequence KNQLIRPKVA…IIDSPGFSSF (155 aa). GTP contacts are provided by residues 110 to 113 and 159 to 167; these read TKID and GQTGVGKTS. Positions 239, 244, 246, and 254 each coordinate Zn(2+).

It belongs to the TRAFAC class YlqF/YawG GTPase family. RsgA subfamily. Monomer. Associates with 30S ribosomal subunit, binds 16S rRNA. Zn(2+) is required as a cofactor.

The protein localises to the cytoplasm. Its function is as follows. One of several proteins that assist in the late maturation steps of the functional core of the 30S ribosomal subunit. Helps release RbfA from mature subunits. May play a role in the assembly of ribosomal proteins into the subunit. Circularly permuted GTPase that catalyzes slow GTP hydrolysis, GTPase activity is stimulated by the 30S ribosomal subunit. In Mesomycoplasma hyopneumoniae (strain 7448) (Mycoplasma hyopneumoniae), this protein is Small ribosomal subunit biogenesis GTPase RsgA.